Consider the following 176-residue polypeptide: PPE family protein PPE57 (176 aa).

It belongs to the mycobacterial PPE family. As to quaternary structure, interacts with human TLR2.

It localises to the secreted. Its subcellular location is the cell wall. The protein resides in the cell surface. In terms of biological role, plays a key role in regulating innate and adaptive immune responses through human Toll-like receptor 2 (TLR2). Interacts with TLR2, leading to the subsequent activation of the mitogen-activated protein kinase (MAPK) and nuclear factor kappa B (NF-kappa-B) signaling pathways. Induces macrophage activation by augmenting the expression of several cell surface molecules (CD40, CD80, CD86 and MHC class II) and pro-inflammatory cytokines (TNF-alpha, IL-6 and IL-12p40) within macrophages. Also participates in adaptive immunity by directing Th1-polarised immune responses. Stimulates specific humoral and cellular immune responses in tuberculosis (TB) patients. Induces a strong IgG(1) antibody response and an increased Th1/Th2 type immune response in mice. The protein is PPE family protein PPE57 of Mycobacterium tuberculosis (strain ATCC 25618 / H37Rv).